A 375-amino-acid chain; its full sequence is 23S rRNA (uracil(747)-C(5))-methyltransferase RlmC (375 aa).

Positions 3, 11, 14, and 87 each coordinate [4Fe-4S] cluster. Positions 212, 241, 262, and 307 each coordinate S-adenosyl-L-methionine. The active-site Nucleophile is Cys-334.

The protein belongs to the class I-like SAM-binding methyltransferase superfamily. RNA M5U methyltransferase family. RlmC subfamily.

The catalysed reaction is uridine(747) in 23S rRNA + S-adenosyl-L-methionine = 5-methyluridine(747) in 23S rRNA + S-adenosyl-L-homocysteine + H(+). In terms of biological role, catalyzes the formation of 5-methyl-uridine at position 747 (m5U747) in 23S rRNA. This chain is 23S rRNA (uracil(747)-C(5))-methyltransferase RlmC, found in Yersinia enterocolitica serotype O:8 / biotype 1B (strain NCTC 13174 / 8081).